Here is a 404-residue protein sequence, read N- to C-terminus: tRNA N6-adenosine threonylcarbamoyltransferase, mitochondrial (404 aa).

The transit peptide at 1–27 (MFQSCLPGALRSWSRGVFSTSTRPRLV) directs the protein to the mitochondrion. A divalent metal cation is bound by residues His135 and His139. Substrate is bound by residues 157-161 (LVSGG), Asp190, Gly210, Glu214, 317-318 (SN), and Thr345. Asp346 is a binding site for a divalent metal cation.

This sequence belongs to the KAE1 / TsaD family. Monomer. A divalent metal cation is required as a cofactor.

It localises to the mitochondrion. The catalysed reaction is L-threonylcarbamoyladenylate + adenosine(37) in tRNA = N(6)-L-threonylcarbamoyladenosine(37) in tRNA + AMP + H(+). Required for the formation of a threonylcarbamoyl group on adenosine at position 37 (t(6)A37) in mitochondrial tRNAs that read codons beginning with adenine. Probably involved in the transfer of the threonylcarbamoyl moiety of threonylcarbamoyl-AMP (TC-AMP) to the N6 group of A37. Involved in mitochondrial genome maintenance. The protein is tRNA N6-adenosine threonylcarbamoyltransferase, mitochondrial of Danio rerio (Zebrafish).